A 319-amino-acid polypeptide reads, in one-letter code: Ornithine carbamoyltransferase (319 aa).

Residues 57–60 (STRT), Gln-84, Arg-108, and 135–138 (HPCQ) each bind carbamoyl phosphate. Residues Asn-166, Asp-230, and 234 to 235 (SM) each bind L-ornithine. Carbamoyl phosphate-binding positions include 270-271 (CL) and Arg-298.

The protein belongs to the aspartate/ornithine carbamoyltransferase superfamily. OTCase family.

The protein localises to the cytoplasm. The catalysed reaction is carbamoyl phosphate + L-ornithine = L-citrulline + phosphate + H(+). It functions in the pathway amino-acid biosynthesis; L-arginine biosynthesis; L-arginine from L-ornithine and carbamoyl phosphate: step 1/3. Functionally, reversibly catalyzes the transfer of the carbamoyl group from carbamoyl phosphate (CP) to the N(epsilon) atom of ornithine (ORN) to produce L-citrulline. The polypeptide is Ornithine carbamoyltransferase (argF) (Bacillus subtilis (strain 168)).